The chain runs to 189 residues: GTPase NRas (189 aa).

GTP is bound by residues 10 to 18 and 29 to 30; these read GAGGVGKSA and VD. The Effector region motif lies at 32 to 40; the sequence is YDPTIEDSY. Residue 57-61 coordinates GTP; sequence DTAGQ. Ser-89 bears the Phosphoserine mark. 116-119 is a binding site for GTP; that stretch reads NKCD. The interval 166–185 is hypervariable region; the sequence is YRMKKLNSSDDGTQGCLGLS. Residue Lys-170 forms a Glycyl lysine isopeptide (Lys-Gly) (interchain with G-Cter in ubiquitin) linkage. Cys-181 is lipidated: S-palmitoyl cysteine. Cys-186 carries the S-farnesyl cysteine lipid modification. The propeptide at 187–189 is removed in mature form; sequence AVM.

It belongs to the small GTPase superfamily. Ras family. In terms of assembly, interacts (active GTP-bound form preferentially) with RGS14. Interacts (active GTP-bound form) with RASSF7. Interacts (active GTP-bound form) with both SHOC2 and PP1c (all isoforms) to form a tertiary complex; SHOC2 and PP1c preferably bind M-Ras/MRAS, but they also bind K-Ras/KRAS, N-Ras/NRAS and H-Ras/HRAS. Post-translationally, palmitoylated by the ZDHHC9-GOLGA7 complex. Depalmitoylated by ABHD17A, ABHD17B and ABHD17C. A continuous cycle of de- and re-palmitoylation regulates rapid exchange between plasma membrane and Golgi. Acetylation at Lys-104 prevents interaction with guanine nucleotide exchange factors (GEFs). In terms of processing, ubiquitinated by the BCR(LZTR1) E3 ubiquitin ligase complex at Lys-170 in a non-degradative manner, leading to inhibit Ras signaling by decreasing Ras association with membranes. Post-translationally, phosphorylation at Ser-89 enhances NRAS association with its downstream effectors.

It localises to the cell membrane. The protein localises to the golgi apparatus membrane. The catalysed reaction is GTP + H2O = GDP + phosphate + H(+). Its activity is regulated as follows. Alternates between an inactive form bound to GDP and an active form bound to GTP. Activated by a guanine nucleotide-exchange factor (GEF) and inactivated by a GTPase-activating protein (GAP). Ras proteins bind GDP/GTP and possess intrinsic GTPase activity. The chain is GTPase NRas (NRAS) from Monodelphis domestica (Gray short-tailed opossum).